We begin with the raw amino-acid sequence, 133 residues long: Interleukin-4 (133 aa).

Positions 1 to 24 are cleaved as a signal peptide; that stretch reads MGLTYQLIPALVCLLAFTSTFVHG. 6 N-linked (GlcNAc...) asparagine glycosylation sites follow: Asn-28, Asn-45, Asn-62, Asn-84, Asn-96, and Asn-102. Disulfide bonds link Cys-48–Cys-85 and Cys-70–Cys-113.

The protein belongs to the IL-4/IL-13 family.

It localises to the secreted. In terms of biological role, participates in at least several B-cell activation processes as well as of other cell types. It is a costimulator of DNA-synthesis. It induces the expression of class II MHC molecules on resting B-cells. It enhances both secretion and cell surface expression of IgE and IgG1. It also regulates the expression of the low affinity Fc receptor for IgE (CD23) on both lymphocytes and monocytes. Positively regulates IL31RA expression in macrophages. Stimulates autophagy in dendritic cells by interfering with mTORC1 signaling and through the induction of RUFY4. In Felis catus (Cat), this protein is Interleukin-4 (IL4).